Here is a 774-residue protein sequence, read N- to C-terminus: Dapper homolog 2 (774 aa).

The stretch at 67 to 93 (PEQQLEAALAALQEQLSRLRQQDIGLK) forms a coiled coil. 4 disordered regions span residues 188 to 225 (RPQA…LDRA), 295 to 319 (TPQR…TIQT), 345 to 500 (TPAK…EKIK), and 624 to 710 (CPES…GAQS). Polar residues predominate over residues 438–452 (VQASPSSKAQQTPSA). The segment covering 637 to 648 (RRAGGPLARGRP) has biased composition (low complexity). Basic and acidic residues-rich tracts occupy residues 655-672 (AYTR…ECDP) and 686-700 (SSDH…RESS). The short motif at 771–774 (MTMV) is the PDZ-binding element.

Belongs to the dapper family. As to quaternary structure, can form homodimers and heterodimers with DACT1 or DACT3. Interacts with CSNK1D, PKA catalytic subunit, PKC-type kinase, CSNK2B, DVL1, DVL2, DVL3, VANGL1, VANGL2, TGFBR1, CTNNB1, CTNND2, CTNND1, LEF1, TCF7, TCF7L1 and HDAC1.

Involved in regulation of intracellular signaling pathways during development. Negatively regulates the Nodal signaling pathway, possibly by promoting the lysosomal degradation of Nodal receptors, such as TGFBR1. May be involved in control of the morphogenetic behavior of kidney ureteric bud cells by keeping cells epithelial and restraining their mesenchymal character. May play an inhibitory role in the re-epithelialization of skin wounds by attenuating TGF-beta signaling. This chain is Dapper homolog 2 (DACT2), found in Homo sapiens (Human).